The primary structure comprises 201 residues: 3-isopropylmalate dehydratase small subunit (201 aa).

The protein belongs to the LeuD family. LeuD type 1 subfamily. Heterodimer of LeuC and LeuD.

The enzyme catalyses (2R,3S)-3-isopropylmalate = (2S)-2-isopropylmalate. It participates in amino-acid biosynthesis; L-leucine biosynthesis; L-leucine from 3-methyl-2-oxobutanoate: step 2/4. Catalyzes the isomerization between 2-isopropylmalate and 3-isopropylmalate, via the formation of 2-isopropylmaleate. The chain is 3-isopropylmalate dehydratase small subunit from Shewanella baltica (strain OS155 / ATCC BAA-1091).